Consider the following 494-residue polypeptide: Alpha-amylase-related protein (494 aa).

The N-terminal stretch at 1 to 20 (MFKFAAAVILCLVAASSTLA) is a signal peptide. Gln-21 is modified (pyrrolidone carboxylic acid). An intrachain disulfide couples Cys-48 to Cys-104. 3 residues coordinate Ca(2+): Asn-118, Gln-169, and Asp-178. Cys-157 and Cys-171 form a disulfide bridge. Arg-206 contributes to the chloride binding site. Asp-208 acts as the Nucleophile in catalysis. His-212 contributes to the Ca(2+) binding site. Glu-245 acts as the Proton donor in catalysis. The chloride site is built by Asn-308 and Arg-343. Intrachain disulfides connect Cys-376–Cys-382, Cys-418–Cys-441, and Cys-448–Cys-460.

It belongs to the glycosyl hydrolase 13 family. In terms of assembly, monomer. Requires Ca(2+) as cofactor. It depends on chloride as a cofactor.

Its subcellular location is the secreted. The enzyme catalyses Endohydrolysis of (1-&gt;4)-alpha-D-glucosidic linkages in polysaccharides containing three or more (1-&gt;4)-alpha-linked D-glucose units.. The chain is Alpha-amylase-related protein (Amyrel) from Drosophila atripex (Fruit fly).